A 122-amino-acid polypeptide reads, in one-letter code: Alpha-amylase/trypsin inhibitor (122 aa).

Disulfide bonds link Cys-6/Cys-55, Cys-20/Cys-44, Cys-29/Cys-85, Cys-45/Cys-103, and Cys-57/Cys-114.

Belongs to the protease inhibitor I6 (cereal trypsin/alpha-amylase inhibitor) family. As to expression, seeds.

The protein resides in the secreted. May play a protective role against endo- and exogenous hydrolytic activities in the Ragi seeds. This chain is Alpha-amylase/trypsin inhibitor, found in Eleusine coracana (Indian finger millet).